Here is a 154-residue protein sequence, read N- to C-terminus: SsrA-binding protein (154 aa).

The disordered stretch occupies residues Lys-135–Arg-154.

This sequence belongs to the SmpB family.

It localises to the cytoplasm. Its function is as follows. Required for rescue of stalled ribosomes mediated by trans-translation. Binds to transfer-messenger RNA (tmRNA), required for stable association of tmRNA with ribosomes. tmRNA and SmpB together mimic tRNA shape, replacing the anticodon stem-loop with SmpB. tmRNA is encoded by the ssrA gene; the 2 termini fold to resemble tRNA(Ala) and it encodes a 'tag peptide', a short internal open reading frame. During trans-translation Ala-aminoacylated tmRNA acts like a tRNA, entering the A-site of stalled ribosomes, displacing the stalled mRNA. The ribosome then switches to translate the ORF on the tmRNA; the nascent peptide is terminated with the 'tag peptide' encoded by the tmRNA and targeted for degradation. The ribosome is freed to recommence translation, which seems to be the essential function of trans-translation. The protein is SsrA-binding protein of Microcystis aeruginosa (strain NIES-843 / IAM M-2473).